The chain runs to 525 residues: MSVEKQTAMRRTFAIISHPDAGKTTLTEKLLLFGGAIQLAGTVKSRKAARHATSDWMELEKQRGISVTTSVMQFPYKDYLINLLDTPGHADFTEDTYRTLTAVDSALMVIDAAKGVEPRTIKLMEVCRLRHTPIMTFINKMDRDTRPSIELLDEIESILRIHCAPVTWPIGMGKYFKGIYHLIEDAIYLYQPGKHERVGESERIEGINNPELDKKLGDLASELRNEIELVKGASHPFEREGYLKGELTPIFFGSAINNFGVGELLDAFVKEAPPPQGRETNSRLVKPEEEKFSGFVFKIQANMDPGHRDRIAFLRIASGQYQKGMKAYHVRLKKEIQINNALTFMAGKRENAEEAWPGDIIGLHNHGTIQIGDTFTQGERFKFTGIPNFASELFRLVRLKDPLKQKALLKGLTQLSEEGATQLFRPLDSNELILGAVGLLQFDVVAYRLENEYNVKCVYESVNVVTARWVICDDKAVLERFNQEQSRNLAYDGGGHLTYLAPSRVNLEITMEKWPEIQFSETREH.

Residues 8-276 (AMRRTFAIIS…AFVKEAPPPQ (269 aa)) enclose the tr-type G domain. Residues 17–24 (SHPDAGKT), 85–89 (DTPGH), and 139–142 (NKMD) each bind GTP.

The protein belongs to the TRAFAC class translation factor GTPase superfamily. Classic translation factor GTPase family. PrfC subfamily.

The protein localises to the cytoplasm. In terms of biological role, increases the formation of ribosomal termination complexes and stimulates activities of RF-1 and RF-2. It binds guanine nucleotides and has strong preference for UGA stop codons. It may interact directly with the ribosome. The stimulation of RF-1 and RF-2 is significantly reduced by GTP and GDP, but not by GMP. The sequence is that of Peptide chain release factor 3 from Coxiella burnetii (strain CbuK_Q154) (Coxiella burnetii (strain Q154)).